Reading from the N-terminus, the 190-residue chain is Holliday junction branch migration complex subunit RuvA (190 aa).

Residues 1–63 (MIRKINATIE…EWNTSLYIFK (63 aa)) are domain I. The domain II stretch occupies residues 64–138 (DKIERDVFES…NSFSAYSTGA (75 aa)). Residues 138–142 (ADTQS) are flexible linker. A domain III region spans residues 143–190 (YGNNNLKEAIEALETLGFQRYEIMKVIGQLDLEDLKTEEIIKECLTRL).

Belongs to the RuvA family. Homotetramer. Forms an RuvA(8)-RuvB(12)-Holliday junction (HJ) complex. HJ DNA is sandwiched between 2 RuvA tetramers; dsDNA enters through RuvA and exits via RuvB. An RuvB hexamer assembles on each DNA strand where it exits the tetramer. Each RuvB hexamer is contacted by two RuvA subunits (via domain III) on 2 adjacent RuvB subunits; this complex drives branch migration. In the full resolvosome a probable DNA-RuvA(4)-RuvB(12)-RuvC(2) complex forms which resolves the HJ.

It localises to the cytoplasm. The RuvA-RuvB-RuvC complex processes Holliday junction (HJ) DNA during genetic recombination and DNA repair, while the RuvA-RuvB complex plays an important role in the rescue of blocked DNA replication forks via replication fork reversal (RFR). RuvA specifically binds to HJ cruciform DNA, conferring on it an open structure. The RuvB hexamer acts as an ATP-dependent pump, pulling dsDNA into and through the RuvAB complex. HJ branch migration allows RuvC to scan DNA until it finds its consensus sequence, where it cleaves and resolves the cruciform DNA. The sequence is that of Holliday junction branch migration complex subunit RuvA from Petrotoga mobilis (strain DSM 10674 / SJ95).